The following is a 131-amino-acid chain: Small ribosomal subunit protein bS6 (131 aa).

The segment at 97 to 131 is disordered; that stretch reads TEASPMAKARDERDSRRGPAGERSYDEAHAEEIAE. Over residues 104–131 the composition is skewed to basic and acidic residues; sequence KARDERDSRRGPAGERSYDEAHAEEIAE.

Belongs to the bacterial ribosomal protein bS6 family.

In terms of biological role, binds together with bS18 to 16S ribosomal RNA. In Shewanella baltica (strain OS223), this protein is Small ribosomal subunit protein bS6.